The chain runs to 24 residues: Protein YsdE (24 aa).

This is Protein YsdE from Escherichia coli (strain K12).